Reading from the N-terminus, the 28-residue chain is Chaperonin GroEL (28 aa).

It belongs to the chaperonin (HSP60) family. In terms of assembly, forms a cylinder of 14 subunits composed of two heptameric rings stacked back-to-back. Interacts with the co-chaperonin GroES.

It is found in the cytoplasm. It catalyses the reaction ATP + H2O + a folded polypeptide = ADP + phosphate + an unfolded polypeptide.. Functionally, together with its co-chaperonin GroES, plays an essential role in assisting protein folding. The GroEL-GroES system forms a nano-cage that allows encapsulation of the non-native substrate proteins and provides a physical environment optimized to promote and accelerate protein folding. This is Chaperonin GroEL from Mycolicibacterium smegmatis (Mycobacterium smegmatis).